Consider the following 353-residue polypeptide: Phosphate acyltransferase (353 aa).

It belongs to the PlsX family. As to quaternary structure, homodimer. Probably interacts with PlsY.

Its subcellular location is the cytoplasm. The catalysed reaction is a fatty acyl-[ACP] + phosphate = an acyl phosphate + holo-[ACP]. It participates in lipid metabolism; phospholipid metabolism. Functionally, catalyzes the reversible formation of acyl-phosphate (acyl-PO(4)) from acyl-[acyl-carrier-protein] (acyl-ACP). This enzyme utilizes acyl-ACP as fatty acyl donor, but not acyl-CoA. This is Phosphate acyltransferase from Agrobacterium fabrum (strain C58 / ATCC 33970) (Agrobacterium tumefaciens (strain C58)).